The following is a 592-amino-acid chain: Methylenetetrahydrofolate reductase (NADH) 1 (592 aa).

The active-site Proton donor/acceptor is Glu21. Residues 21 to 26 and 52 to 53 contribute to the NAD(+) site; these read EFFPPK and TW. Residues 52–53, His81, 111–113, Tyr153, 157–160, Asp175, and Lys182 each bind FAD; these read TW, RGD, and HPDV. Residue Asp113 coordinates substrate. Residues Gln193 and Tyr285 each coordinate substrate.

This sequence belongs to the methylenetetrahydrofolate reductase family. In terms of assembly, homodimer. It depends on FAD as a cofactor.

The catalysed reaction is (6S)-5-methyl-5,6,7,8-tetrahydrofolate + NAD(+) = (6R)-5,10-methylene-5,6,7,8-tetrahydrofolate + NADH + H(+). The protein operates within one-carbon metabolism; tetrahydrofolate interconversion. Plant MTHFRs strongly prefer NADH over NADPH. Not inhibited by methionine or S-adenosylmethionine. Its function is as follows. The probable reversibility of the MTHFR reaction in plants suggests that they can metabolize the methyl group of 5,10-methylenetetrahydrofolate to serine, sugars and starch. This is Methylenetetrahydrofolate reductase (NADH) 1 (MTHFR1) from Arabidopsis thaliana (Mouse-ear cress).